Consider the following 365-residue polypeptide: Putative agmatine deiminase (365 aa).

Agmatine is bound by residues E214 and D220. The active-site Amidino-cysteine intermediate is the C357.

The protein belongs to the agmatine deiminase family. As to quaternary structure, tetramer of two homodimers.

The catalysed reaction is agmatine + H2O = N-carbamoylputrescine + NH4(+). The sequence is that of Putative agmatine deiminase from Enterococcus faecalis (strain ATCC 700802 / V583).